A 1394-amino-acid chain; its full sequence is DNA-directed RNA polymerase subunit beta' (1394 aa).

Residues Cys71, Cys73, Cys86, and Cys89 each contribute to the Zn(2+) site. Positions 462, 464, and 466 each coordinate Mg(2+). Zn(2+) is bound by residues Cys811, Cys885, Cys892, and Cys895.

Belongs to the RNA polymerase beta' chain family. In terms of assembly, the RNAP catalytic core consists of 2 alpha, 1 beta, 1 beta' and 1 omega subunit. When a sigma factor is associated with the core the holoenzyme is formed, which can initiate transcription. Requires Mg(2+) as cofactor. Zn(2+) serves as cofactor.

It carries out the reaction RNA(n) + a ribonucleoside 5'-triphosphate = RNA(n+1) + diphosphate. DNA-dependent RNA polymerase catalyzes the transcription of DNA into RNA using the four ribonucleoside triphosphates as substrates. This is DNA-directed RNA polymerase subunit beta' from Xanthobacter autotrophicus (strain ATCC BAA-1158 / Py2).